A 136-amino-acid polypeptide reads, in one-letter code: MLQPKRTKFRKMFKGRNRGLANGTEVSFGDFGLKAVGRGRLTARQIEAARRAMTRHIKRQGQIWIRVFPDKPITSKPLEVRMGKGKGNVEYWVCQIQPGKVLYEMDGVTEELAREAFALAAAKLPLKTTFVTKTVM.

It belongs to the universal ribosomal protein uL16 family. In terms of assembly, part of the 50S ribosomal subunit.

Its function is as follows. Binds 23S rRNA and is also seen to make contacts with the A and possibly P site tRNAs. The chain is Large ribosomal subunit protein uL16 from Shewanella sediminis (strain HAW-EB3).